The sequence spans 312 residues: Pantothenate kinase (312 aa).

97-104 serves as a coordination point for ATP; that stretch reads GSVAVGKS.

Belongs to the prokaryotic pantothenate kinase family.

Its subcellular location is the cytoplasm. It carries out the reaction (R)-pantothenate + ATP = (R)-4'-phosphopantothenate + ADP + H(+). Its pathway is cofactor biosynthesis; coenzyme A biosynthesis; CoA from (R)-pantothenate: step 1/5. The protein is Pantothenate kinase of Mycolicibacterium smegmatis (strain ATCC 700084 / mc(2)155) (Mycobacterium smegmatis).